The sequence spans 429 residues: uncharacterized protein (429 aa).

Residues serine 116, aspartate 179, and histidine 206 each act as charge relay system in the active site.

The protein belongs to the AB hydrolase 3 family.

The protein resides in the cytoplasm. It is found in the nucleus. This is an uncharacterized protein from Schizosaccharomyces pombe (strain 972 / ATCC 24843) (Fission yeast).